We begin with the raw amino-acid sequence, 435 residues long: Secreted RxLR effector protein 35 (435 aa).

The first 22 residues, 1 to 22 (MRGAYYIIIALCVVASSQVAAG), serve as a signal peptide directing secretion. Positions 48 to 65 (RFLRGSRVVHDDLANEER) match the RxLR-dEER motif. Residues 336-357 (RPKRTTDGNTGTISLPTKPTKT) form a disordered region. Positions 342–354 (DGNTGTISLPTKP) are enriched in polar residues.

Belongs to the RxLR effector family.

The protein localises to the secreted. It is found in the host nucleus. Secreted effector that acts as an elicitor that induces cell death in host plant cells. The sequence is that of Secreted RxLR effector protein 35 from Plasmopara viticola (Downy mildew of grapevine).